We begin with the raw amino-acid sequence, 61 residues long: Small ribosomal subunit protein uS14 (61 aa).

Positions 24, 27, 40, and 43 each coordinate Zn(2+).

The protein belongs to the universal ribosomal protein uS14 family. Zinc-binding uS14 subfamily. Part of the 30S ribosomal subunit. Contacts proteins S3 and S10. The cofactor is Zn(2+).

Its function is as follows. Binds 16S rRNA, required for the assembly of 30S particles and may also be responsible for determining the conformation of the 16S rRNA at the A site. The sequence is that of Small ribosomal subunit protein uS14 from Alkaliphilus metalliredigens (strain QYMF).